We begin with the raw amino-acid sequence, 635 residues long: Threonine--tRNA ligase (635 aa).

Residues 1-61 (MIVITLPDGS…EGDARLAIVT (61 aa)) form the TGS domain. Positions 242–533 (DHRKLGRELD…LIEQHAGALP (292 aa)) are catalytic. Zn(2+) contacts are provided by cysteine 333, histidine 384, and histidine 510.

The protein belongs to the class-II aminoacyl-tRNA synthetase family. Homodimer. Zn(2+) is required as a cofactor.

The protein resides in the cytoplasm. The catalysed reaction is tRNA(Thr) + L-threonine + ATP = L-threonyl-tRNA(Thr) + AMP + diphosphate + H(+). In terms of biological role, catalyzes the attachment of threonine to tRNA(Thr) in a two-step reaction: L-threonine is first activated by ATP to form Thr-AMP and then transferred to the acceptor end of tRNA(Thr). Also edits incorrectly charged L-seryl-tRNA(Thr). This is Threonine--tRNA ligase from Methylibium petroleiphilum (strain ATCC BAA-1232 / LMG 22953 / PM1).